The sequence spans 140 residues: Mercuric transport protein MerC (140 aa).

Residues 2–10 (GLMTRIADK) lie on the Cytoplasmic side of the membrane. The helical transmembrane segment at 11–31 (TGALGSVVSAMGCAACFPALA) threads the bilayer. Residues Gly-22 and Ala-25 each contribute to the Hg(2+) site. Residues 32–46 (SFGAAIGLGFLSQYE) are Periplasmic-facing. The chain crosses the membrane as a helical span at residues 47 to 67 (GLFISRLLPLFAALAFLANAL). The Cytoplasmic segment spans residues 68-78 (GWFSHRQWLRS). A helical transmembrane segment spans residues 79-99 (LLGMIGPAIVFAATVWLLGNW). Over 100–106 (WTANLMY) the chain is Periplasmic. The helical transmembrane segment at 107–127 (VGLALMIGVSIWDFVSPAHRR) threads the bilayer. At 128–140 (CGPDGCELPAKRL) the chain is on the cytoplasmic side.

The protein resides in the cell inner membrane. With respect to regulation, uptake of Hg(2+) is decreased by iodoacetamide and iodoacetate, and is completely inhibited by the thiol-modifying reagent N-ethylmaleimide (NEM). Functionally, involved in mercuric ion uptake and binding. MerC-mediated Hg(2+) uptake does not require MerP. In Shigella flexneri, this protein is Mercuric transport protein MerC.